Reading from the N-terminus, the 79-residue chain is Large ribosomal subunit protein bL31 (79 aa).

Belongs to the bacterial ribosomal protein bL31 family. Type A subfamily. In terms of assembly, part of the 50S ribosomal subunit.

In terms of biological role, binds the 23S rRNA. In Synechococcus sp. (strain CC9902), this protein is Large ribosomal subunit protein bL31.